Reading from the N-terminus, the 49-residue chain is Glutathione peroxidase (49 aa).

It belongs to the glutathione peroxidase family.

It carries out the reaction 2 glutathione + H2O2 = glutathione disulfide + 2 H2O. Its activity is regulated as follows. Inhibited by Cu(2+), SDS and DTT. Activity is slightly increased by Fe(2+), Mn(2+), triton X-100 and EDTA. Its function is as follows. Glutathione peroxidase which may protect the cell from oxidative damage. The chain is Glutathione peroxidase from Lactiplantibacillus plantarum (Lactobacillus plantarum).